The primary structure comprises 342 residues: Maltose regulon regulatory protein MalI (342 aa).

Residues 7–61 (ITIHDVALAAGVSVSTVSLVLSGKGRISTATGERVNAAIEELGFVRNRQASALRG) enclose the HTH lacI-type domain. The segment at residues 9-28 (IHDVALAAGVSVSTVSLVLS) is a DNA-binding region (H-T-H motif).

Repressor for the malX and malY genes. Also regulates its own expression. Binds maltose as an inducer. This Escherichia coli (strain K12) protein is Maltose regulon regulatory protein MalI (malI).